A 164-amino-acid polypeptide reads, in one-letter code: Neurotrophin-3 (164 aa).

Positions 1–3 are cleaved as a signal peptide; it reads IQS. Positions 4–118 are excised as a propeptide; that stretch reads TSMDQGBLSE…GLNRTSRRKR (115 aa). The disordered stretch occupies residues 89–126; that stretch reads LLSENTPLEPPPLYLTEEPMGLNRTSRRKRFAEGKSHR. Asn111 carries N-linked (GlcNAc...) asparagine glycosylation.

The protein belongs to the NGF-beta family.

It is found in the secreted. Functionally, seems to promote the survival of visceral and proprioceptive sensory neurons. In Cylindrophis ruffus (Red-tailed pipe snake), this protein is Neurotrophin-3 (NTF3).